We begin with the raw amino-acid sequence, 457 residues long: Exodeoxyribonuclease 7 large subunit (457 aa).

Belongs to the XseA family. In terms of assembly, heterooligomer composed of large and small subunits.

It is found in the cytoplasm. It catalyses the reaction Exonucleolytic cleavage in either 5'- to 3'- or 3'- to 5'-direction to yield nucleoside 5'-phosphates.. In terms of biological role, bidirectionally degrades single-stranded DNA into large acid-insoluble oligonucleotides, which are then degraded further into small acid-soluble oligonucleotides. The protein is Exodeoxyribonuclease 7 large subunit of Cronobacter sakazakii (strain ATCC BAA-894) (Enterobacter sakazakii).